Here is a 929-residue protein sequence, read N- to C-terminus: Protocadherin gamma-B3 (929 aa).

The N-terminal stretch at 1 to 30 (MGNSSGWRGPAGQRRMLFLFLLSLLDQALS) is a signal peptide. 6 Cadherin domains span residues 31–133 (EPIR…PPTF), 134–242 (SQNI…PPVF), 243–347 (TQDM…APEI), 348–452 (TLAS…VPVF), 453–562 (HQAS…APLV), and 570–675 (EGSA…QPDL). Residues 31–691 (EPIRYAIPEE…SDPQAELQFH (661 aa)) are Extracellular-facing. Asn136 carries an N-linked (GlcNAc...) asparagine glycan. N-linked (GlcNAc...) asparagine glycosylation is found at Asn419 and Asn545. Residues 692–712 (LVVALALISVLFLLAVILAIS) form a helical membrane-spanning segment. Over 713–929 (LRLRCSSRPA…KKKSGKKEKK (217 aa)) the chain is Cytoplasmic. 2 disordered regions span residues 791–838 (NDNP…WPNN) and 899–929 (ATLTNAAGKRDGKAPAGGNGNKKKSGKKEKK). Basic residues predominate over residues 919–929 (NKKKSGKKEKK).

It is found in the cell membrane. Functionally, potential calcium-dependent cell-adhesion protein. May be involved in the establishment and maintenance of specific neuronal connections in the brain. This is Protocadherin gamma-B3 (PCDHGB3) from Homo sapiens (Human).